A 297-amino-acid chain; its full sequence is MKRPDYRTLQALDAVIRERGFERAAQKLCITQSAVSQRIKQLENMFGQPLLVRTVPPRPTEQGQKLLALLRQVELLEEEWLGDEQTGSTPLLLSLAVNADSLATWLLPALANVLSDSPIRLNLQVEDETRTQERLRRGEVVGAVSIQPQALPSCLVDQLGALDYLFVASKEFAQRYFPNGVTRSALLKAPVVAFDHLDDMHQAFLQQNFDLPPGSVPCHIVNSSEAFVQLARQGTTCCMIPHLQIEKELNSGELIDLTPGLFQRRMLYWHRFAPESRMMRRVTDALIDYGHKVLRQD.

Residues 4–60 enclose the HTH lysR-type domain; the sequence is PDYRTLQALDAVIRERGFERAAQKLCITQSAVSQRIKQLENMFGQPLLVRTVPPRPT. The H-T-H motif DNA-binding region spans 21 to 40; it reads FERAAQKLCITQSAVSQRIK.

This sequence belongs to the LysR transcriptional regulatory family. Homodimer.

Controls the transcription of genes involved in arginine and lysine metabolism. This is HTH-type transcriptional regulator ArgP from Klebsiella pneumoniae subsp. pneumoniae (strain ATCC 700721 / MGH 78578).